A 382-amino-acid chain; its full sequence is Homoserine O-acetyltransferase (382 aa).

In terms of domain architecture, AB hydrolase-1 spans 52–356 (NVVMVLHALT…TYGHDGFLVE (305 aa)). Serine 157 (nucleophile) is an active-site residue. Arginine 227 lines the substrate pocket. Catalysis depends on residues aspartate 320 and histidine 350. Aspartate 351 provides a ligand contact to substrate.

This sequence belongs to the AB hydrolase superfamily. MetX family. In terms of assembly, homodimer.

The protein resides in the cytoplasm. It carries out the reaction L-homoserine + acetyl-CoA = O-acetyl-L-homoserine + CoA. It functions in the pathway amino-acid biosynthesis; L-methionine biosynthesis via de novo pathway; O-acetyl-L-homoserine from L-homoserine: step 1/1. Its function is as follows. Transfers an acetyl group from acetyl-CoA to L-homoserine, forming acetyl-L-homoserine. The sequence is that of Homoserine O-acetyltransferase from Mycobacterium leprae (strain TN).